The sequence spans 461 residues: ATP synthase subunit beta (461 aa).

151–158 (GGAGVGKT) contacts ATP.

Belongs to the ATPase alpha/beta chains family. F-type ATPases have 2 components, CF(1) - the catalytic core - and CF(0) - the membrane proton channel. CF(1) has five subunits: alpha(3), beta(3), gamma(1), delta(1), epsilon(1). CF(0) has three main subunits: a(1), b(2) and c(9-12). The alpha and beta chains form an alternating ring which encloses part of the gamma chain. CF(1) is attached to CF(0) by a central stalk formed by the gamma and epsilon chains, while a peripheral stalk is formed by the delta and b chains.

It is found in the cell inner membrane. It carries out the reaction ATP + H2O + 4 H(+)(in) = ADP + phosphate + 5 H(+)(out). In terms of biological role, produces ATP from ADP in the presence of a proton gradient across the membrane. The catalytic sites are hosted primarily by the beta subunits. This is ATP synthase subunit beta from Coxiella burnetii (strain RSA 331 / Henzerling II).